A 334-amino-acid chain; its full sequence is MTRSLFKGNFWSADILSTIGYDNIIQHLNNGRKNCKEFEDFLKERAAIEERYGKDLLNLSRKKPCGQSEINTLKRALEVFKQQVDNVAQCHIQLAQSLREEARKMEEFREKQKLQRKKTELIMDAIHKQKSLQFKKTMDAKKNYEQKCRDKDEAEQAVSRSANLVNPKQQEKLFVKLATSKTAVEDSDKAYMLHIGTLDKVREEWQSEHIKACEAFEAQECERINFFRNALWLHVNQLSQQCVTSDEMYEQVRKSLEMCSIQRDIEYFVNQRKTGQIPPAPIMYENFYSSQKNAVPAGKATGPNLARRGPLPIPKSSPDDPNYSLVDDYSLLYQ.

In terms of domain architecture, F-BAR spans 4–264; the sequence is SLFKGNFWSA…SLEMCSIQRD (261 aa). Residues 66-166 are a coiled coil; sequence GQSEINTLKR…AVSRSANLVN (101 aa). A disordered region spans residues 295–322; the sequence is VPAGKATGPNLARRGPLPIPKSSPDDPN. Residues Tyr-323 and Tyr-329 each carry the phosphotyrosine modification.

Post-translationally, phosphorylated on tyrosine.

It is found in the cytoplasm. The protein localises to the membrane. Functionally, binds to F-actin. May be involved in regulation of the actin cytoskeleton. This is Proline-serine-threonine phosphatase-interacting protein 2 (PSTPIP2) from Homo sapiens (Human).